The following is a 397-amino-acid chain: T-box transcription factor TBX19 (397 aa).

A DNA-binding region (T-box) is located at residues 48–216 (LWQRFREVTN…YNPFAKAFLD (169 aa)). The disordered stretch occupies residues 220-248 (RNHPKDAPEAASEGQHMTYSHSPQAPHGC).

Its subcellular location is the nucleus. Functionally, may be involved in the initial formation of the chordamesoderm. This is T-box transcription factor TBX19 from Gallus gallus (Chicken).